We begin with the raw amino-acid sequence, 184 residues long: Large ribosomal subunit protein uL6 (184 aa).

It belongs to the universal ribosomal protein uL6 family. Part of the 50S ribosomal subunit.

This protein binds to the 23S rRNA, and is important in its secondary structure. It is located near the subunit interface in the base of the L7/L12 stalk, and near the tRNA binding site of the peptidyltransferase center. The protein is Large ribosomal subunit protein uL6 of Desulfitobacterium hafniense (strain Y51).